The sequence spans 579 residues: Laccase-24 (579 aa).

The N-terminal stretch at 1–23 (MARSWSLLLLPFALALVASVAQA) is a signal peptide. Plastocyanin-like domains lie at 31 to 148 (NVGN…PRGG) and 159 to 322 (EEVV…YGGG). N-linked (GlcNAc...) asparagine glycans are attached at residues N34 and N78. Cu cation contacts are provided by H82 and H84. N-linked (GlcNAc...) asparagine glycosylation is found at N110 and N116. Residues H127 and H129 each contribute to the Cu cation site. N204, N209, N219, N241, N312, N337, N348, N398, N405, N444, and N462 each carry an N-linked (GlcNAc...) asparagine glycan. Positions 425–563 (DFPDTPPIVF…GMVFEVQNGP (139 aa)) constitute a Plastocyanin-like 3 domain. Residues H480, H483, and H485 each contribute to the Cu cation site. N500 carries N-linked (GlcNAc...) asparagine glycosylation. Positions 542, 543, 544, and 548 each coordinate Cu cation.

The protein belongs to the multicopper oxidase family. Requires Cu cation as cofactor.

Its subcellular location is the secreted. The protein resides in the extracellular space. It is found in the apoplast. It carries out the reaction 4 hydroquinone + O2 = 4 benzosemiquinone + 2 H2O. Lignin degradation and detoxification of lignin-derived products. The chain is Laccase-24 (LAC24) from Oryza sativa subsp. japonica (Rice).